The chain runs to 689 residues: Glycine--tRNA ligase beta subunit (689 aa).

Belongs to the class-II aminoacyl-tRNA synthetase family. As to quaternary structure, tetramer of two alpha and two beta subunits.

The protein resides in the cytoplasm. It catalyses the reaction tRNA(Gly) + glycine + ATP = glycyl-tRNA(Gly) + AMP + diphosphate. In Escherichia coli O17:K52:H18 (strain UMN026 / ExPEC), this protein is Glycine--tRNA ligase beta subunit.